Here is a 372-residue protein sequence, read N- to C-terminus: NAD(P)H-quinone oxidoreductase subunit 1 (372 aa).

8 consecutive transmembrane segments (helical) span residues 27-47 (LLWI…GVLV), 97-117 (VLFT…WLIV), 128-148 (VGIG…GLLM), 166-186 (AAQS…IVMM), 204-224 (FLSW…ICAL), 266-286 (VLSA…PISI), 308-328 (SLGI…AILL), and 347-367 (FLLP…LAFP).

It belongs to the complex I subunit 1 family. NDH-1 is composed of at least 11 different subunits.

It is found in the cellular thylakoid membrane. It catalyses the reaction a plastoquinone + NADH + (n+1) H(+)(in) = a plastoquinol + NAD(+) + n H(+)(out). It carries out the reaction a plastoquinone + NADPH + (n+1) H(+)(in) = a plastoquinol + NADP(+) + n H(+)(out). In terms of biological role, NDH-1 shuttles electrons from an unknown electron donor, via FMN and iron-sulfur (Fe-S) centers, to quinones in the respiratory and/or the photosynthetic chain. The immediate electron acceptor for the enzyme in this species is believed to be plastoquinone. Couples the redox reaction to proton translocation, and thus conserves the redox energy in a proton gradient. The chain is NAD(P)H-quinone oxidoreductase subunit 1 from Prochlorococcus marinus (strain NATL2A).